A 487-amino-acid polypeptide reads, in one-letter code: Beta-barrel assembly-enhancing protease (487 aa).

Positions 1-27 (MFRQLKKNLVATLIAAMTIGQVAPAFA) are cleaved as a signal peptide. Residue His136 participates in Zn(2+) binding. Glu137 is an active-site residue. His140 and Glu201 together coordinate Zn(2+). Asp205 functions as the Proton donor in the catalytic mechanism. TPR repeat units lie at residues 309–342 (RAAQYGRALQAMEANKYDEARKTLQPLLAAEPGN), 344–376 (WYLDLATDIDLGQNKANEAINRLKNARDLRTNP), 377–409 (VLQLNLANAYLQGGQPQEAANILNRYTFNNKDD), and 427–460 (DQELAARAEGYALAGRLDQAISLLSSASSQVKLG).

This sequence belongs to the peptidase M48 family. BepA subfamily. Interacts with BamA and LoiP. Zn(2+) serves as cofactor.

The protein resides in the periplasm. With respect to regulation, protease activity is inhibited by the metal chelating reagents 1,10-phenanthroline and EDTA. Its function is as follows. Functions both as a chaperone and a metalloprotease. Maintains the integrity of the outer membrane by promoting either the assembly or the elimination of outer membrane proteins, depending on their folding state. Promotes disulfide rearrangement of LptD during its biogenesis, and proteolytic degradation of LptD and BamA when their proper assembly is compromised. May facilitate membrane attachment of LoiP under unfavorable conditions. The polypeptide is Beta-barrel assembly-enhancing protease (Escherichia coli (strain K12)).